Reading from the N-terminus, the 616-residue chain is Dihydroxy-acid dehydratase (616 aa).

Asp-81 provides a ligand contact to Mg(2+). [2Fe-2S] cluster is bound at residue Cys-122. Residues Asp-123 and Lys-124 each contribute to the Mg(2+) site. Residue Lys-124 is modified to N6-carboxylysine. Residue Cys-195 coordinates [2Fe-2S] cluster. Glu-491 contacts Mg(2+). The active-site Proton acceptor is Ser-517.

This sequence belongs to the IlvD/Edd family. As to quaternary structure, homodimer. It depends on [2Fe-2S] cluster as a cofactor. The cofactor is Mg(2+).

The enzyme catalyses (2R)-2,3-dihydroxy-3-methylbutanoate = 3-methyl-2-oxobutanoate + H2O. The catalysed reaction is (2R,3R)-2,3-dihydroxy-3-methylpentanoate = (S)-3-methyl-2-oxopentanoate + H2O. It participates in amino-acid biosynthesis; L-isoleucine biosynthesis; L-isoleucine from 2-oxobutanoate: step 3/4. It functions in the pathway amino-acid biosynthesis; L-valine biosynthesis; L-valine from pyruvate: step 3/4. Its function is as follows. Functions in the biosynthesis of branched-chain amino acids. Catalyzes the dehydration of (2R,3R)-2,3-dihydroxy-3-methylpentanoate (2,3-dihydroxy-3-methylvalerate) into 2-oxo-3-methylpentanoate (2-oxo-3-methylvalerate) and of (2R)-2,3-dihydroxy-3-methylbutanoate (2,3-dihydroxyisovalerate) into 2-oxo-3-methylbutanoate (2-oxoisovalerate), the penultimate precursor to L-isoleucine and L-valine, respectively. This Escherichia coli (strain 55989 / EAEC) protein is Dihydroxy-acid dehydratase.